Here is a 664-residue protein sequence, read N- to C-terminus: E3 ubiquitin-protein ligase CHFR (664 aa).

The disordered stretch occupies residues 1–21; it reads MERPEEGKQSPPPQPWGRLLR. Residues 38–89 form the FHA domain; it reads WTIGRRRGCDLSFPSNKLVSGDHCRIVVDEKSGQVTLEDTSTSGTVINKLKV. The interval 142 to 267 is disordered; that stretch reads FHGTKDTSGA…KKMRGDGDLD (126 aa). The span at 186–198 shows a compositional bias: low complexity; it reads PTASASSTEPSPA. The residue at position 244 (serine 244) is a Phosphoserine. Residues 254–264 show a composition bias toward basic and acidic residues; the sequence is EPVKKKMRGDG. Residues 304–343 form an RING-type zinc finger; sequence CIICQDLLHDCVSLQPCMHTFCAACYSGWMERSSLCPTCR. Residue threonine 386 is modified to Phosphothreonine. Disordered stretches follow at residues 388 to 417 and 439 to 461; these read DMLQPKVRRSFSDEEGSSEDLLELSDVDSE and AQPPHCPAPEGEPGAPQALGDAP. Acidic residues predominate over residues 400–417; sequence DEEGSSEDLLELSDVDSE. The PBZ-type zinc-finger motif lies at 633–655; it reads PDCYWGRNCRTQVKAHHAMKFNH.

Belongs to the CHFR family. As to quaternary structure, interacts with HDAC1 and HDAC2. Interacts with PML (with sumoylated form of PML). Post-translationally, poly-ADP-ribosylated. In addition to binding non covalently poly(ADP-ribose) via its PBZ-type zinc finger, the protein is also covalently poly-ADP-ribosylated by PARP1. Autoubiquitinated; may regulate its cellular level. In terms of processing, phosphorylated by PKB. Phosphorylation may affect its E3 ligase activity. As to expression, ubiquitous.

It localises to the nucleus. The protein localises to the PML body. It catalyses the reaction S-ubiquitinyl-[E2 ubiquitin-conjugating enzyme]-L-cysteine + [acceptor protein]-L-lysine = [E2 ubiquitin-conjugating enzyme]-L-cysteine + N(6)-ubiquitinyl-[acceptor protein]-L-lysine.. It participates in protein modification; protein ubiquitination. Functionally, E3 ubiquitin-protein ligase that functions in the antephase checkpoint by actively delaying passage into mitosis in response to microtubule poisons. Acts in early prophase before chromosome condensation, when the centrosome move apart from each other along the periphery of the nucleus. Probably involved in signaling the presence of mitotic stress caused by microtubule poisons by mediating the 'Lys-48'-linked ubiquitination of target proteins, leading to their degradation by the proteasome. Promotes the ubiquitination and subsequent degradation of AURKA and PLK1. Probably acts as a tumor suppressor, possibly by mediating the polyubiquitination of HDAC1, leading to its degradation. May also promote the formation of 'Lys-63'-linked polyubiquitin chains and functions with the specific ubiquitin-conjugating UBC13-MMS2 (UBE2N-UBE2V2) heterodimer. Substrates that are polyubiquitinated at 'Lys-63' are usually not targeted for degradation, but are rather involved in signaling cellular stress. The sequence is that of E3 ubiquitin-protein ligase CHFR (CHFR) from Homo sapiens (Human).